Here is a 208-residue protein sequence, read N- to C-terminus: MGTGGSLLCGCSLVLSCLCPSASLPDPGNSTWPPGAQAGLPAALALPLPRLPRILFPMAGRPARPSSDFVGCAQGMCCHGRQGTVHIHTSSVSCWTPCPVTGTGGTAVSRKDRVLPHRRQVSLACVCAVGERAGQLWSQKPVQMARPSARHLLPRGSSPNSQAVLLPSVCPVPWPPVGPSPGQGEGLSPAFPGVGTDRGDSWALVLQV.

Positions Met1–Ser23 are cleaved as a signal peptide. Asn29 is a glycosylation site (N-linked (GlcNAc...) asparagine).

It localises to the secreted. This Homo sapiens (Human) protein is Putative chemokine-related protein FP248.